The chain runs to 762 residues: Acyl-homoserine lactone acylase PvdQ (762 aa).

The N-terminal stretch at 1 to 23 is a signal peptide; the sequence is MGMRTVLTGLAGMLLGSMMPVQA. A propeptide spans 194-216 (spacer peptide); sequence ALSGEQAFQVAEQRRQRFRLERG. Ser-217 functions as the Nucleophile in the catalytic mechanism.

This sequence belongs to the peptidase S45 family. In terms of assembly, heterodimer of an alpha subunit and a beta subunit processed from the same precursor.

The protein localises to the periplasm. It catalyses the reaction an N-acyl-L-homoserine lactone + H2O = L-homoserine lactone + a carboxylate. Catalyzes the deacylation of acyl-homoserine lactone (AHL or acyl-HSL), releasing homoserine lactone (HSL) and the corresponding fatty acid. Possesses a specificity for the degradation of long-chain acyl-HSLs (side chains of 11 to 14 carbons in length). Degrades 3-oxo-C12-HSL, one of the two main AHL signal molecules of P.aeruginosa, and thereby functions as a quorum quencher, inhibiting the las quorum-sensing system. Therefore, may enable P.aeruginosa to modulate its own quorum-sensing-dependent pathogenic potential. Also appears to be required for pyoverdin biosynthesis. The polypeptide is Acyl-homoserine lactone acylase PvdQ (pvdQ) (Pseudomonas aeruginosa (strain ATCC 15692 / DSM 22644 / CIP 104116 / JCM 14847 / LMG 12228 / 1C / PRS 101 / PAO1)).